Consider the following 184-residue polypeptide: Ribosome-recycling factor (184 aa).

It belongs to the RRF family.

It is found in the cytoplasm. Its function is as follows. Responsible for the release of ribosomes from messenger RNA at the termination of protein biosynthesis. May increase the efficiency of translation by recycling ribosomes from one round of translation to another. The sequence is that of Ribosome-recycling factor from Clostridium botulinum (strain Okra / Type B1).